The following is a 92-amino-acid chain: Co-chaperonin GroES (92 aa).

This sequence belongs to the GroES chaperonin family. In terms of assembly, heptamer of 7 subunits arranged in a ring. Interacts with the chaperonin GroEL.

It localises to the cytoplasm. Its function is as follows. Together with the chaperonin GroEL, plays an essential role in assisting protein folding. The GroEL-GroES system forms a nano-cage that allows encapsulation of the non-native substrate proteins and provides a physical environment optimized to promote and accelerate protein folding. GroES binds to the apical surface of the GroEL ring, thereby capping the opening of the GroEL channel. The protein is Co-chaperonin GroES of Methanosarcina mazei (strain ATCC BAA-159 / DSM 3647 / Goe1 / Go1 / JCM 11833 / OCM 88) (Methanosarcina frisia).